The following is a 455-amino-acid chain: Putative PTS system EIIBC component YbbF (455 aa).

One can recognise a PTS EIIB type-1 domain in the interval 8-90; the sequence is HHLAQKILEL…SKLVSAEEGA (83 aa). Catalysis depends on Cys-30, which acts as the Phosphocysteine intermediate; for EIIB activity. The PTS EIIC type-1 domain maps to 116 to 455; that stretch reads RKIASIFIPL…YKDEMASQFD (340 aa). The next 10 helical transmembrane spans lie at 118–138, 154–174, 181–201, 210–230, 250–270, 281–301, 325–345, 355–375, 399–419, and 423–443; these read IASI…ITGI, IAII…ILVG, FGGT…PEIA, LLPG…IAYT, VSLL…GGFI, ILDI…LPLV, LLPI…AVFV, AIAG…IFGV, YFQV…FLVL, and IILY…LTYA.

The protein localises to the cell membrane. The phosphoenolpyruvate-dependent sugar phosphotransferase system (sugar PTS), a major carbohydrate active -transport system, catalyzes the phosphorylation of incoming sugar substrates concomitantly with their translocation across the cell membrane. The polypeptide is Putative PTS system EIIBC component YbbF (ybbF) (Bacillus subtilis (strain 168)).